Consider the following 355-residue polypeptide: Ribosomal RNA small subunit methyltransferase H (355 aa).

Residues 55-57 (GGH), Asp75, Asp122, and Gln129 contribute to the S-adenosyl-L-methionine site. The tract at residues 327–355 (ERTSQPLPATGAEDFVPAVPGAAEKGRRR) is disordered.

It belongs to the methyltransferase superfamily. RsmH family.

Its subcellular location is the cytoplasm. It catalyses the reaction cytidine(1402) in 16S rRNA + S-adenosyl-L-methionine = N(4)-methylcytidine(1402) in 16S rRNA + S-adenosyl-L-homocysteine + H(+). Its function is as follows. Specifically methylates the N4 position of cytidine in position 1402 (C1402) of 16S rRNA. The protein is Ribosomal RNA small subunit methyltransferase H of Bordetella avium (strain 197N).